We begin with the raw amino-acid sequence, 492 residues long: Bifunctional purine biosynthesis protein PurH (492 aa).

The MGS-like domain maps to 1-144 (MKKVILSVSD…KNFKHVTTIV (144 aa)).

The protein belongs to the PurH family.

The catalysed reaction is (6R)-10-formyltetrahydrofolate + 5-amino-1-(5-phospho-beta-D-ribosyl)imidazole-4-carboxamide = 5-formamido-1-(5-phospho-D-ribosyl)imidazole-4-carboxamide + (6S)-5,6,7,8-tetrahydrofolate. The enzyme catalyses IMP + H2O = 5-formamido-1-(5-phospho-D-ribosyl)imidazole-4-carboxamide. It participates in purine metabolism; IMP biosynthesis via de novo pathway; 5-formamido-1-(5-phospho-D-ribosyl)imidazole-4-carboxamide from 5-amino-1-(5-phospho-D-ribosyl)imidazole-4-carboxamide (10-formyl THF route): step 1/1. Its pathway is purine metabolism; IMP biosynthesis via de novo pathway; IMP from 5-formamido-1-(5-phospho-D-ribosyl)imidazole-4-carboxamide: step 1/1. The protein is Bifunctional purine biosynthesis protein PurH of Staphylococcus carnosus (strain TM300).